Here is a 276-residue protein sequence, read N- to C-terminus: Lysosome-associated membrane glycoprotein 5 (276 aa).

The signal sequence occupies residues 1-27 (MDYRACTSALRMPVLLLLLCTFSCNLA). Over 28 to 231 (EQEVENLSGL…PTDQRKQLEE (204 aa)) the chain is Extracellular. Asparagine 33, asparagine 51, and asparagine 100 each carry an N-linked (GlcNAc...) asparagine glycan. The helical transmembrane segment at 232 to 252 (TLPLILGLTLGVAILIIVAVY) threads the bilayer. The Cytoplasmic segment spans residues 253–276 (HIHHKMTANQVQIPRDRSLYKHMG).

The protein belongs to the LAMP family. Post-translationally, glycosylated.

The protein resides in the cytoplasmic vesicle membrane. It localises to the cell membrane. Its subcellular location is the cell projection. It is found in the dendrite. The protein localises to the cytoplasmic vesicle. The protein resides in the secretory vesicle. It localises to the synaptic vesicle membrane. Its subcellular location is the growth cone membrane. It is found in the early endosome membrane. The protein localises to the recycling endosome. The protein resides in the endoplasmic reticulum-Golgi intermediate compartment membrane. It localises to the endosome membrane. In terms of biological role, plays a role in short-term synaptic plasticity in a subset of GABAergic neurons in the brain. This is Lysosome-associated membrane glycoprotein 5 (lamp5) from Xenopus tropicalis (Western clawed frog).